A 574-amino-acid chain; its full sequence is 3-hydroxy-3-methylglutaryl-coenzyme A reductase 3 (574 aa).

Residues 1–30 (MDVRRRPVKPLYPSEHISSGEPLKPHNQDS) form a disordered region. A helical transmembrane segment spans residues 41 to 61 (PLYLTNGLFFTMFFSVMYFLL). N-linked (GlcNAc...) asparagine glycosylation occurs at N78. The helical transmembrane segment at 83 to 103 (VAMVSLIASVIYLLGFFGIGF) threads the bilayer. Residues 104–161 (VQSFVSKGNNDSWDVEDESPEQFIDRTVTPPPVRRNIPMKSVPVAEKTAQIITPFSSE) form a linker region. N113 is a glycosylation site (N-linked (GlcNAc...) asparagine). Residues 162 to 574 (DDEVVIKSVV…YNRSCKDVTK (413 aa)) form a catalytic region. Catalysis depends on E256, which acts as the Charge relay system. The N-linked (GlcNAc...) asparagine glycan is linked to N320. K388 (charge relay system) is an active-site residue. A glycan (N-linked (GlcNAc...) asparagine) is linked at N433. The active-site Charge relay system is the D464. H562 serves as the catalytic Proton donor. N566 is a glycosylation site (N-linked (GlcNAc...) asparagine).

Belongs to the HMG-CoA reductase family. Expressed in mature petals and anthers.

It localises to the endoplasmic reticulum membrane. It carries out the reaction (R)-mevalonate + 2 NADP(+) + CoA = (3S)-3-hydroxy-3-methylglutaryl-CoA + 2 NADPH + 2 H(+). It functions in the pathway metabolic intermediate biosynthesis; (R)-mevalonate biosynthesis; (R)-mevalonate from acetyl-CoA: step 3/3. Functionally, catalyzes the synthesis of mevalonate. The specific precursor of all isoprenoid compounds present in plants. The sequence is that of 3-hydroxy-3-methylglutaryl-coenzyme A reductase 3 (HMG3) from Solanum tuberosum (Potato).